The sequence spans 431 residues: Glycolipid 2-alpha-mannosyltransferase 1 (431 aa).

The Cytoplasmic portion of the chain corresponds to 1–9 (MASTRSNAR). A helical; Signal-anchor for type II membrane protein membrane pass occupies residues 10–28 (LIRFGIFALVLIGCGYILT). Topologically, residues 29–431 (RGSSFQPPNY…RQKGWEKYTA (403 aa)) are lumenal. Positions 35 to 44 (PPNYQQTQSP) are enriched in polar residues. The disordered stretch occupies residues 35 to 73 (PPNYQQTQSPAAHEKQTGNVAAGGGAGSGSAGAQVPLGK). Residues 55–64 (AAGGGAGSGS) show a composition bias toward gly residues. Glutamate 318 acts as the Nucleophile in catalysis.

It belongs to the glycosyltransferase 15 family.

Its subcellular location is the golgi apparatus membrane. Its pathway is protein modification; protein glycosylation. Its function is as follows. Involved in O-glycosylation of cell wall and secreted proteins. Transfers an alpha-D-mannosyl residue from GDP-mannose into lipid-linked oligosaccharide, forming an alpha-(1-&gt;2)-D-mannosyl-D-mannose linkage. Mainly responsible for the addition of the second mannose residue in an O-linked mannose pentamer. Can also substitute for MNT2 by adding the third mannose residue. Important for adherence to host surfaces and for virulence. The chain is Glycolipid 2-alpha-mannosyltransferase 1 (MNT1) from Candida albicans (strain SC5314 / ATCC MYA-2876) (Yeast).